The sequence spans 1018 residues: Serine/threonine-protein kinase 31 (1018 aa).

Residues 78-137 (NLDPKKIYGGLFSEDKCWYRCKVLKTISDDKCLVRYIDYGNTEILNRSDIVEIPPELQFS) form the Tudor domain. Residues 298-358 (AKIKQDQKLI…TKHLESTLKT (61 aa)) adopt a coiled-coil conformation. Positions 711–1018 (IGLLKYMNSG…EKTRNGEANP (308 aa)) constitute a Protein kinase domain. Residues 717–725 (MNSGGLLTM) and K738 contribute to the ATP site. The interval 988 to 1018 (IECTQHSREDESKMESLDRYSEKTRNGEANP) is disordered.

Belongs to the protein kinase superfamily. Ser/Thr protein kinase family. As to expression, testis specific. Expressed only in male germ cells.

The catalysed reaction is L-seryl-[protein] + ATP = O-phospho-L-seryl-[protein] + ADP + H(+). It catalyses the reaction L-threonyl-[protein] + ATP = O-phospho-L-threonyl-[protein] + ADP + H(+). The protein is Serine/threonine-protein kinase 31 (Stk31) of Mus musculus (Mouse).